The primary structure comprises 435 residues: Elongation factor 1-alpha (435 aa).

The region spanning lysine 4–valine 229 is the tr-type G domain. The interval glycine 13–serine 20 is G1. Glycine 13–serine 20 contributes to the GTP binding site. Serine 20 provides a ligand contact to Mg(2+). The tract at residues glycine 69–asparagine 73 is G2. The G3 stretch occupies residues aspartate 90–glycine 93. GTP-binding positions include aspartate 90–histidine 94 and asparagine 152–aspartate 155. Residues asparagine 152 to aspartate 155 are G4. Residues valine 193 to proline 195 are G5.

Belongs to the TRAFAC class translation factor GTPase superfamily. Classic translation factor GTPase family. EF-Tu/EF-1A subfamily.

It is found in the cytoplasm. It carries out the reaction GTP + H2O = GDP + phosphate + H(+). GTP hydrolase that promotes the GTP-dependent binding of aminoacyl-tRNA to the A-site of ribosomes during protein biosynthesis. The sequence is that of Elongation factor 1-alpha from Sulfolobus acidocaldarius (strain ATCC 33909 / DSM 639 / JCM 8929 / NBRC 15157 / NCIMB 11770).